Here is a 185-residue protein sequence, read N- to C-terminus: Potassium-transporting ATPase KdpC subunit (185 aa).

A helical membrane pass occupies residues 11 to 31 (LALLMTLVTGALYPLAVTGIA).

It belongs to the KdpC family. As to quaternary structure, the system is composed of three essential subunits: KdpA, KdpB and KdpC.

The protein localises to the cell inner membrane. In terms of biological role, part of the high-affinity ATP-driven potassium transport (or Kdp) system, which catalyzes the hydrolysis of ATP coupled with the electrogenic transport of potassium into the cytoplasm. This subunit acts as a catalytic chaperone that increases the ATP-binding affinity of the ATP-hydrolyzing subunit KdpB by the formation of a transient KdpB/KdpC/ATP ternary complex. The polypeptide is Potassium-transporting ATPase KdpC subunit (Pseudomonas putida (strain ATCC 47054 / DSM 6125 / CFBP 8728 / NCIMB 11950 / KT2440)).